The primary structure comprises 297 residues: 4,5-DOPA dioxygenase extradiol-like protein (297 aa).

Zn(2+)-binding residues include H30, H82, H205, and H263.

The protein belongs to the DODA-type extradiol aromatic ring-opening dioxygenase family. Zn(2+) serves as cofactor.

The protein resides in the cytoplasm. It is found in the nucleus. Functionally, may be involved in the metabolism of aromatic compounds. This Schizosaccharomyces pombe (strain 972 / ATCC 24843) (Fission yeast) protein is 4,5-DOPA dioxygenase extradiol-like protein.